The chain runs to 230 residues: Ribonuclease 3 (230 aa).

In terms of domain architecture, RNase III spans 1–134; sequence MKQLEELLST…FLGALLLDKG (134 aa). Glutamate 47 is a binding site for Mg(2+). Residue aspartate 51 is part of the active site. Positions 120 and 123 each coordinate Mg(2+). Residue glutamate 123 is part of the active site. Positions 160-229 constitute a DRBM domain; sequence DYKTCLQEFL…AKNALAQLSE (70 aa).

The protein belongs to the ribonuclease III family. In terms of assembly, homodimer. Requires Mg(2+) as cofactor.

It is found in the cytoplasm. It catalyses the reaction Endonucleolytic cleavage to 5'-phosphomonoester.. In terms of biological role, digests double-stranded RNA. Involved in the processing of primary rRNA transcript to yield the immediate precursors to the large and small rRNAs (23S and 16S). Processes some mRNAs, and tRNAs when they are encoded in the rRNA operon. Processes pre-crRNA and tracrRNA of type II CRISPR loci if present in the organism. This chain is Ribonuclease 3, found in Streptococcus pyogenes serotype M49 (strain NZ131).